A 144-amino-acid polypeptide reads, in one-letter code: Bacilliredoxin SSP1311 (144 aa).

It belongs to the bacilliredoxin family.

This Staphylococcus saprophyticus subsp. saprophyticus (strain ATCC 15305 / DSM 20229 / NCIMB 8711 / NCTC 7292 / S-41) protein is Bacilliredoxin SSP1311.